The following is a 375-amino-acid chain: Actin-related protein T1 (375 aa).

It belongs to the actin family.

It localises to the cytoplasm. Its subcellular location is the cytoskeleton. The protein localises to the nucleus. It is found in the cytoplasmic vesicle. The protein resides in the secretory vesicle. It localises to the acrosome. In terms of biological role, negatively regulates the Hedgehog (SHH) signaling. Binds to the promoter of the SHH signaling mediator, GLI1, and inhibits its expression. The polypeptide is Actin-related protein T1 (ACTRT1) (Macaca fascicularis (Crab-eating macaque)).